A 503-amino-acid chain; its full sequence is Activin receptor type-1-like (503 aa).

The N-terminal stretch at 1-21 (MTLGSPRRGLLMLLMALVTQG) is a signal peptide. The Extracellular portion of the chain corresponds to 22 to 118 (DPVKPSRGPL…PSEQPGTDGQ (97 aa)). Intrachain disulfides connect cysteine 34/cysteine 51, cysteine 36/cysteine 41, and cysteine 46/cysteine 69. The tract at residues 73 to 76 (HREL) is mediates specificity for BMP ligand. 2 cysteine pairs are disulfide-bonded: cysteine 77-cysteine 89 and cysteine 90-cysteine 95. The N-linked (GlcNAc...) asparagine glycan is linked to asparagine 98. The helical transmembrane segment at 119–141 (LALILGPVLALLALVALGVLGLW) threads the bilayer. The Cytoplasmic portion of the chain corresponds to 142–503 (HVRRRQEKQR…NSPEKPKVIQ (362 aa)). Residues serine 155, serine 160, and serine 161 each carry the phosphoserine modification. Residues 172–201 (SMLGDLLDSDCTTGSGSGLPFLVQRTVARQ) enclose the GS domain. The Protein kinase domain occupies 202–492 (VALVECVGKG…LRIKKTLQKI (291 aa)). ATP-binding positions include 208–216 (VGKGRYGEV) and lysine 229. Aspartate 330 serves as the catalytic Proton acceptor.

Belongs to the protein kinase superfamily. TKL Ser/Thr protein kinase family. TGFB receptor subfamily. Interacts with TSC22D1/TSC-22. The cofactor is Mg(2+). It depends on Mn(2+) as a cofactor.

The protein localises to the cell membrane. It carries out the reaction L-threonyl-[receptor-protein] + ATP = O-phospho-L-threonyl-[receptor-protein] + ADP + H(+). The catalysed reaction is L-seryl-[receptor-protein] + ATP = O-phospho-L-seryl-[receptor-protein] + ADP + H(+). Functionally, type I receptor for TGF-beta family ligands BMP9/GDF2 and BMP10 and important regulator of normal blood vessel development. On ligand binding, forms a receptor complex consisting of two type II and two type I transmembrane serine/threonine kinases. Type II receptors phosphorylate and activate type I receptors which autophosphorylate, then bind and activate SMAD transcriptional regulators. May bind activin as well. This Pongo abelii (Sumatran orangutan) protein is Activin receptor type-1-like (ACVRL1).